The primary structure comprises 466 residues: Cysteine--tRNA ligase (466 aa).

Cys29 contacts Zn(2+). The 'HIGH' region signature appears at 31–41; that stretch reads ATVQAAPHIGH. Positions 208, 233, and 237 each coordinate Zn(2+). Positions 264–268 match the 'KMSKS' region motif; it reads KMSKS. An ATP-binding site is contributed by Lys267.

This sequence belongs to the class-I aminoacyl-tRNA synthetase family. In terms of assembly, monomer. The cofactor is Zn(2+).

It localises to the cytoplasm. It carries out the reaction tRNA(Cys) + L-cysteine + ATP = L-cysteinyl-tRNA(Cys) + AMP + diphosphate. The sequence is that of Cysteine--tRNA ligase from Streptomyces griseus subsp. griseus (strain JCM 4626 / CBS 651.72 / NBRC 13350 / KCC S-0626 / ISP 5235).